Consider the following 236-residue polypeptide: Small ribosomal subunit protein uS2c (236 aa).

Belongs to the universal ribosomal protein uS2 family.

Its subcellular location is the plastid. The protein localises to the chloroplast. This chain is Small ribosomal subunit protein uS2c (rps2), found in Populus alba (White poplar).